Reading from the N-terminus, the 139-residue chain is Large-conductance mechanosensitive channel (139 aa).

Transmembrane regions (helical) follow at residues 16–36 (VIDL…VDSL) and 83–103 (GQFI…FVAV).

The protein belongs to the MscL family. In terms of assembly, homopentamer.

Its subcellular location is the cell inner membrane. Its function is as follows. Channel that opens in response to stretch forces in the membrane lipid bilayer. May participate in the regulation of osmotic pressure changes within the cell. This chain is Large-conductance mechanosensitive channel, found in Aromatoleum aromaticum (strain DSM 19018 / LMG 30748 / EbN1) (Azoarcus sp. (strain EbN1)).